The primary structure comprises 468 residues: ATP synthase subunit beta (468 aa).

148–155 (GGAGVGKT) contributes to the ATP binding site.

It belongs to the ATPase alpha/beta chains family. In terms of assembly, F-type ATPases have 2 components, CF(1) - the catalytic core - and CF(0) - the membrane proton channel. CF(1) has five subunits: alpha(3), beta(3), gamma(1), delta(1), epsilon(1). CF(0) has three main subunits: a(1), b(2) and c(9-12). The alpha and beta chains form an alternating ring which encloses part of the gamma chain. CF(1) is attached to CF(0) by a central stalk formed by the gamma and epsilon chains, while a peripheral stalk is formed by the delta and b chains.

The protein resides in the cell inner membrane. The enzyme catalyses ATP + H2O + 4 H(+)(in) = ADP + phosphate + 5 H(+)(out). Functionally, produces ATP from ADP in the presence of a proton gradient across the membrane. The catalytic sites are hosted primarily by the beta subunits. In Xanthomonas oryzae pv. oryzae (strain KACC10331 / KXO85), this protein is ATP synthase subunit beta.